Reading from the N-terminus, the 479-residue chain is Anaerobic nitric oxide reductase flavorubredoxin (479 aa).

The zinc metallo-hydrolase stretch occupies residues 30 to 210 (LRGSSYNSYL…PFSRLVTPKI (181 aa)). Fe cation-binding residues include His79, Glu81, Asp83, His147, Asp166, and His227. One can recognise a Flavodoxin-like domain in the interval 254-393 (ITIVYDTMSN…LCREHGREIA (140 aa)). FMN-binding positions include 260 to 264 (TMSNN) and 342 to 369 (AFGSHGWSGGAVDRLSTRLQDAGFEMSL). The Rubredoxin-like domain occupies 423-474 (GPRMQCSVCQWIYDPAKGEPMQDVAPGTPWSEVPDNFLCPECSLGKDVFDEL). Fe cation contacts are provided by Cys428, Cys431, Cys461, and Cys464.

The protein in the N-terminal section; belongs to the zinc metallo-hydrolase group 3 family. As to quaternary structure, homotetramer. The cofactor is Fe cation. FMN is required as a cofactor.

Its subcellular location is the cytoplasm. It participates in nitrogen metabolism; nitric oxide reduction. In terms of biological role, anaerobic nitric oxide reductase; uses NADH to detoxify nitric oxide (NO), protecting several 4Fe-4S NO-sensitive enzymes. Has at least 2 reductase partners, only one of which (NorW, flavorubredoxin reductase) has been identified. NO probably binds to the di-iron center; electrons enter from the NorW at rubredoxin and are transferred sequentially to the FMN center and the di-iron center. Also able to function as an aerobic oxygen reductase. In Escherichia coli (strain UTI89 / UPEC), this protein is Anaerobic nitric oxide reductase flavorubredoxin.